We begin with the raw amino-acid sequence, 233 residues long: tRNA (guanine-N(7)-)-methyltransferase (233 aa).

The segment at 1–22 (MIDENHPMRAAGNFFGRRHGKP) is disordered. S-adenosyl-L-methionine-binding residues include glutamate 64, glutamate 89, aspartate 116, and aspartate 138. Aspartate 138 is a catalytic residue. Substrate is bound by residues lysine 142, aspartate 174, and 212–215 (TRYE).

Belongs to the class I-like SAM-binding methyltransferase superfamily. TrmB family.

It catalyses the reaction guanosine(46) in tRNA + S-adenosyl-L-methionine = N(7)-methylguanosine(46) in tRNA + S-adenosyl-L-homocysteine. It participates in tRNA modification; N(7)-methylguanine-tRNA biosynthesis. Its function is as follows. Catalyzes the formation of N(7)-methylguanine at position 46 (m7G46) in tRNA. The protein is tRNA (guanine-N(7)-)-methyltransferase of Brucella abortus (strain 2308).